A 521-amino-acid polypeptide reads, in one-letter code: Probable cytosol aminopeptidase (521 aa).

The Mn(2+) site is built by Lys-268 and Asp-273. The active site involves Lys-280. 3 residues coordinate Mn(2+): Asp-291, Asp-350, and Glu-352. Arg-354 is an active-site residue.

Belongs to the peptidase M17 family. Requires Mn(2+) as cofactor.

It localises to the cytoplasm. The enzyme catalyses Release of an N-terminal amino acid, Xaa-|-Yaa-, in which Xaa is preferably Leu, but may be other amino acids including Pro although not Arg or Lys, and Yaa may be Pro. Amino acid amides and methyl esters are also readily hydrolyzed, but rates on arylamides are exceedingly low.. It carries out the reaction Release of an N-terminal amino acid, preferentially leucine, but not glutamic or aspartic acids.. Functionally, presumably involved in the processing and regular turnover of intracellular proteins. Catalyzes the removal of unsubstituted N-terminal amino acids from various peptides. This chain is Probable cytosol aminopeptidase, found in Chromobacterium violaceum (strain ATCC 12472 / DSM 30191 / JCM 1249 / CCUG 213 / NBRC 12614 / NCIMB 9131 / NCTC 9757 / MK).